The chain runs to 758 residues: 3-isopropylmalate dehydratase (758 aa).

[4Fe-4S] cluster is bound by residues cysteine 359, cysteine 420, and cysteine 423. 2 positions are modified to phosphoserine: serine 486 and serine 488.

The protein belongs to the aconitase/IPM isomerase family. The cofactor is [4Fe-4S] cluster.

It catalyses the reaction (2R,3S)-3-isopropylmalate = (2S)-2-isopropylmalate. The protein operates within amino-acid biosynthesis; L-leucine biosynthesis; L-leucine from 3-methyl-2-oxobutanoate: step 2/4. Catalyzes the isomerization between 2-isopropylmalate and 3-isopropylmalate, via the formation of 2-isopropylmaleate. The protein is 3-isopropylmalate dehydratase (leu2) of Schizosaccharomyces pombe (strain 972 / ATCC 24843) (Fission yeast).